We begin with the raw amino-acid sequence, 275 residues long: MAIRIFAILFSTFVFGTFAHAQEGMRERSDWRKFFSEFQAKGTIVVADERQTDRVILVFDQVRSEKRYSPASTFKIPHTLFALDAGAARDEFQVFRWDGIKRSFAAHNQDQDLRSAMRNSTVWIYELFAKEIGEDKARRYLKQIDYGNADPSTSNGDYWIDGNLAIAAQEQIAFLRKLYHNELPFRVEHQRLVKDLMIVEAGRNWILRAKTGWEGRIGWWVGWVEWPTGPVFFALNIDTPNRMDDLFKREAIVRAILRSIEALPPNPAVNSDAAR.

An N-terminal signal peptide occupies residues 1–21; it reads MAIRIFAILFSTFVFGTFAHA. The Acyl-ester intermediate role is filled by serine 72. Residue lysine 75 is modified to N6-carboxylysine. 210–212 provides a ligand contact to substrate; the sequence is KTG.

This sequence belongs to the class-D beta-lactamase family.

The enzyme catalyses a beta-lactam + H2O = a substituted beta-amino acid. This is an oxacillin-hydrolyzing beta-lactamase. The chain is Beta-lactamase OXA-3 (bla) from Pseudomonas aeruginosa.